The sequence spans 102 residues: Small ribosomal subunit protein uS10 (102 aa).

Residues 37 to 61 (PIPLPTKSLKITTRKSTDGEGSSSF) form a disordered region.

Belongs to the universal ribosomal protein uS10 family. In terms of assembly, part of the 30S ribosomal subunit.

Functionally, involved in the binding of tRNA to the ribosomes. This Methanococcus vannielii (strain ATCC 35089 / DSM 1224 / JCM 13029 / OCM 148 / SB) protein is Small ribosomal subunit protein uS10.